Reading from the N-terminus, the 139-residue chain is Small ribosomal subunit protein bS6 (139 aa).

A disordered region spans residues 119–139 (LKGASKVETPTGPESTDIQEK). Positions 130-139 (GPESTDIQEK) are enriched in polar residues.

This sequence belongs to the bacterial ribosomal protein bS6 family.

Binds together with bS18 to 16S ribosomal RNA. The sequence is that of Small ribosomal subunit protein bS6 from Borreliella burgdorferi (strain ZS7) (Borrelia burgdorferi).